A 463-amino-acid polypeptide reads, in one-letter code: Methionine aminopeptidase 2-2 (463 aa).

The segment at 1–107 (MGAKTFEGGD…VPLSQLFPDG (107 aa)) is disordered. Residues 37-53 (EDGDGEFGTDDDDDGDG) are compositionally biased toward acidic residues. Basic residues predominate over residues 69 to 83 (PKKRKRSKKKKSNKK). A substrate-binding site is contributed by His215. 3 residues coordinate a divalent metal cation: Asp236, Asp247, and His316. Residue His324 participates in substrate binding. A divalent metal cation is bound by residues Glu349 and Glu444.

It belongs to the peptidase M24A family. Methionine aminopeptidase eukaryotic type 2 subfamily. It depends on Co(2+) as a cofactor. Zn(2+) serves as cofactor. The cofactor is Mn(2+). Requires Fe(2+) as cofactor.

The protein resides in the cytoplasm. The catalysed reaction is Release of N-terminal amino acids, preferentially methionine, from peptides and arylamides.. Functionally, cotranslationally removes the N-terminal methionine from nascent proteins. The N-terminal methionine is often cleaved when the second residue in the primary sequence is small and uncharged (Met-Ala-, Cys, Gly, Pro, Ser, Thr, or Val). In Talaromyces marneffei (strain ATCC 18224 / CBS 334.59 / QM 7333) (Penicillium marneffei), this protein is Methionine aminopeptidase 2-2.